A 362-amino-acid polypeptide reads, in one-letter code: Probable cysteine protease RDL2 (362 aa).

A signal peptide spans 1-28; sequence MAATPIRVIVSALVILSVLLLSSSLGVA. The propeptide at 29 to 129 is activation peptide; the sequence is TETEIERNET…ERYLYKEGDV (101 aa). Asn36 carries N-linked (GlcNAc...) asparagine glycosylation. Disulfide bonds link Cys151–Cys194 and Cys185–Cys228. Residue Cys154 is part of the active site. The N-linked (GlcNAc...) asparagine glycan is linked to Asn234. Cys287 and Cys338 are disulfide-bonded. Residues His293 and Asn313 contribute to the active site.

This sequence belongs to the peptidase C1 family.

Its function is as follows. Probable thiol protease. In Arabidopsis thaliana (Mouse-ear cress), this protein is Probable cysteine protease RDL2.